Consider the following 185-residue polypeptide: MFFSNKTKEVKTIAKQDLFIXDEIRVREVRLIGLEGEQLGIKPLSEAQALADNANVDLVLIQPQAKPPVAKIMDYGKFKFEYQKKQKEQRKKQSVVTVKEVRLSPTIDKGDFDTKLRNARKFLEKGNKVKVSIRFKGRMITHKEIGAKVLAEFAEATQDIAIIEQRAKMDGRQMFMQLAPATDKK.

It belongs to the IF-3 family. As to quaternary structure, monomer.

It localises to the cytoplasm. IF-3 binds to the 30S ribosomal subunit and shifts the equilibrium between 70S ribosomes and their 50S and 30S subunits in favor of the free subunits, thus enhancing the availability of 30S subunits on which protein synthesis initiation begins. The sequence is that of Translation initiation factor IF-3 from Streptococcus pneumoniae serotype 19F (strain G54).